Reading from the N-terminus, the 106-residue chain is Cell division protein FtsB (106 aa).

The Cytoplasmic portion of the chain corresponds to 1–3; the sequence is MGK. The chain crosses the membrane as a helical span at residues 4-21; the sequence is LTLLLLALLGWLQYSLWL. The Periplasmic portion of the chain corresponds to 22–106; sequence GKNGVHDYVR…ASSSQNNLQK (85 aa). Positions 40 to 62 form a coiled coil; the sequence is QGSNAKLKARNDQLFAEIDDLNG.

Belongs to the FtsB family. Part of a complex composed of FtsB, FtsL and FtsQ.

The protein resides in the cell inner membrane. Its function is as follows. Essential cell division protein. May link together the upstream cell division proteins, which are predominantly cytoplasmic, with the downstream cell division proteins, which are predominantly periplasmic. The chain is Cell division protein FtsB from Serratia proteamaculans (strain 568).